The chain runs to 109 residues: Avian agnoprotein 2b (109 aa).

A disordered region spans residues 89-109 (QPALASRLTQPNRPNRGRLAK).

The protein localises to the host cytoplasm. In Psittacidae (parrots), this protein is Avian agnoprotein 2b.